A 178-amino-acid chain; its full sequence is uncharacterized protein (178 aa).

This is an uncharacterized protein from Bacillus subtilis (strain 168).